The sequence spans 223 residues: Ion-translocating oxidoreductase complex subunit E (223 aa).

6 consecutive transmembrane segments (helical) span residues Asn-17 to Thr-37, Leu-40 to Phe-60, Ile-70 to Ala-90, Glu-94 to Ala-114, Phe-129 to Val-149, and Trp-182 to Val-202.

Belongs to the NqrDE/RnfAE family. The complex is composed of six subunits: RnfA, RnfB, RnfC, RnfD, RnfE and RnfG.

It is found in the cell inner membrane. In terms of biological role, part of a membrane-bound complex that couples electron transfer with translocation of ions across the membrane. This chain is Ion-translocating oxidoreductase complex subunit E, found in Paramagnetospirillum magneticum (strain ATCC 700264 / AMB-1) (Magnetospirillum magneticum).